Here is a 346-residue protein sequence, read N- to C-terminus: Mitogen-activated protein kinase kinase 1c (346 aa).

The Protein kinase domain occupies 70–332 (LELVRFLGKG…TTDLLKHPFL (263 aa)). ATP is bound by residues 76-84 (LGKGAGGTV) and Lys99. The active-site Proton acceptor is the Asp194.

It belongs to the protein kinase superfamily. STE Ser/Thr protein kinase family. MAP kinase kinase subfamily.

It catalyses the reaction L-seryl-[protein] + ATP = O-phospho-L-seryl-[protein] + ADP + H(+). The enzyme catalyses L-threonyl-[protein] + ATP = O-phospho-L-threonyl-[protein] + ADP + H(+). The catalysed reaction is L-tyrosyl-[protein] + ATP = O-phospho-L-tyrosyl-[protein] + ADP + H(+). Functionally, the CERK1, MEKK1a/b, MKK1a/b/c and MPK4a/b proteins are involved in pathogen defense. The pathway induces rapid growth inhibition, cell wall depositions and accumulation of defense-related transcripts. This protein is required for full defense response to fungal pathogen chitin. This Physcomitrium patens (Spreading-leaved earth moss) protein is Mitogen-activated protein kinase kinase 1c.